Consider the following 119-residue polypeptide: Fluoride-specific ion channel FluC (119 aa).

4 helical membrane-spanning segments follow: residues 5 to 25 (IIPLSIGAALGATARWLLNLA), 34 to 54 (TGNLFANWTGALLIGIFAETI), 59 to 79 (WKLLLITGFLGSLTTLSGFSL), and 97 to 117 (IFLHTAGSLLLTWLGLKIGAA). Na(+) contacts are provided by Gly69 and Thr72.

Belongs to the fluoride channel Fluc/FEX (TC 1.A.43) family.

The protein resides in the cell inner membrane. It carries out the reaction fluoride(in) = fluoride(out). Its activity is regulated as follows. Na(+) is not transported, but it plays an essential structural role and its presence is essential for fluoride channel function. Fluoride-specific ion channel. Important for reducing fluoride concentration in the cell, thus reducing its toxicity. This is Fluoride-specific ion channel FluC from Neisseria meningitidis serogroup C / serotype 2a (strain ATCC 700532 / DSM 15464 / FAM18).